Here is a 172-residue protein sequence, read N- to C-terminus: Inorganic pyrophosphatase (172 aa).

Substrate is bound by residues lysine 28, arginine 42, and tyrosine 54. 3 residues coordinate Mg(2+): aspartate 64, aspartate 69, and aspartate 101. A substrate-binding site is contributed by tyrosine 140.

The protein belongs to the PPase family. Homohexamer. Requires Mg(2+) as cofactor.

It is found in the cytoplasm. It carries out the reaction diphosphate + H2O = 2 phosphate + H(+). In terms of biological role, catalyzes the hydrolysis of inorganic pyrophosphate (PPi) forming two phosphate ions. The sequence is that of Inorganic pyrophosphatase from Campylobacter jejuni subsp. jejuni serotype O:2 (strain ATCC 700819 / NCTC 11168).